The sequence spans 469 residues: 3-isopropylmalate dehydratase large subunit (469 aa).

[4Fe-4S] cluster is bound by residues cysteine 347, cysteine 410, and cysteine 413.

The protein belongs to the aconitase/IPM isomerase family. LeuC type 1 subfamily. As to quaternary structure, heterodimer of LeuC and LeuD. The cofactor is [4Fe-4S] cluster.

The catalysed reaction is (2R,3S)-3-isopropylmalate = (2S)-2-isopropylmalate. The protein operates within amino-acid biosynthesis; L-leucine biosynthesis; L-leucine from 3-methyl-2-oxobutanoate: step 2/4. Functionally, catalyzes the isomerization between 2-isopropylmalate and 3-isopropylmalate, via the formation of 2-isopropylmaleate. This Burkholderia pseudomallei (strain 1106a) protein is 3-isopropylmalate dehydratase large subunit.